We begin with the raw amino-acid sequence, 286 residues long: Shikimate dehydrogenase (NADP(+)) (286 aa).

Shikimate is bound by residues Ser-19–Ser-21 and Thr-66. Lys-70 acts as the Proton acceptor in catalysis. Residues Asn-91 and Asp-106 each coordinate shikimate. NADP(+) contacts are provided by residues Gly-130–Ser-134 and Ala-225. Tyr-227 provides a ligand contact to shikimate. Gly-248 lines the NADP(+) pocket.

Belongs to the shikimate dehydrogenase family. As to quaternary structure, homodimer.

It carries out the reaction shikimate + NADP(+) = 3-dehydroshikimate + NADPH + H(+). Its pathway is metabolic intermediate biosynthesis; chorismate biosynthesis; chorismate from D-erythrose 4-phosphate and phosphoenolpyruvate: step 4/7. In terms of biological role, involved in the biosynthesis of the chorismate, which leads to the biosynthesis of aromatic amino acids. Catalyzes the reversible NADPH linked reduction of 3-dehydroshikimate (DHSA) to yield shikimate (SA). The polypeptide is Shikimate dehydrogenase (NADP(+)) (Dehalococcoides mccartyi (strain CBDB1)).